The sequence spans 751 residues: Pyridoxal-dependent decarboxylase domain-containing protein 1 (751 aa).

Positions 659 to 751 (QMRKEDSPDS…QEAESVETIR (93 aa)) are disordered. The span at 690–702 (DSISETSSVSQLE) shows a compositional bias: polar residues. The span at 720 to 729 (PQERPAHILE) shows a compositional bias: basic and acidic residues. A compositionally biased stretch (acidic residues) spans 742–751 (QEAESVETIR).

It belongs to the group II decarboxylase family. Pyridoxal 5'-phosphate is required as a cofactor.

The protein is Pyridoxal-dependent decarboxylase domain-containing protein 1 (pdxdc1) of Danio rerio (Zebrafish).